A 174-amino-acid polypeptide reads, in one-letter code: NADH-quinone oxidoreductase subunit C (174 aa).

This sequence belongs to the complex I 30 kDa subunit family. As to quaternary structure, NDH-1 is composed of 14 different subunits. Subunits NuoB, C, D, E, F, and G constitute the peripheral sector of the complex.

It localises to the cell membrane. The enzyme catalyses a quinone + NADH + 5 H(+)(in) = a quinol + NAD(+) + 4 H(+)(out). NDH-1 shuttles electrons from NADH, via FMN and iron-sulfur (Fe-S) centers, to quinones in the respiratory chain. The immediate electron acceptor for the enzyme in this species is believed to be ubiquinone. Couples the redox reaction to proton translocation (for every two electrons transferred, four hydrogen ions are translocated across the cytoplasmic membrane), and thus conserves the redox energy in a proton gradient. The sequence is that of NADH-quinone oxidoreductase subunit C from Roseiflexus castenholzii (strain DSM 13941 / HLO8).